We begin with the raw amino-acid sequence, 116 residues long: UPF0122 protein CA_C1753 (116 aa).

Belongs to the UPF0122 family.

Might take part in the signal recognition particle (SRP) pathway. This is inferred from the conservation of its genetic proximity to ftsY/ffh. May be a regulatory protein. The protein is UPF0122 protein CA_C1753 of Clostridium acetobutylicum (strain ATCC 824 / DSM 792 / JCM 1419 / IAM 19013 / LMG 5710 / NBRC 13948 / NRRL B-527 / VKM B-1787 / 2291 / W).